Consider the following 873-residue polypeptide: Zinc fingers and homeoboxes protein 1 (873 aa).

Positions 24–63 are disordered; that stretch reads LISDLDEGPPVLTPVENTRAESISSDEEVHESVDSDNQQN. The residue at position 36 (T36) is a Phosphothreonine. S45, S47, and S48 each carry phosphoserine. 2 C2H2-type zinc fingers span residues 70–93 and 102–125; these read YECK…DSEH and YVCV…LKYH. K159 is covalently cross-linked (Glycyl lysine isopeptide (Lys-Gly) (interchain with G-Cter in SUMO2)). A Phosphoserine modification is found at S202. Residues 202-236 form a disordered region; that stretch reads SVEDVPEEKENEIKPDREEIVENPSSSASESNTST. The segment covering 212-221 has biased composition (basic and acidic residues); it reads NEIKPDREEI. A compositionally biased stretch (low complexity) spans 223 to 236; sequence ENPSSSASESNTST. Residues 272 to 432 form a required for dimerization region; sequence NSNLIPKVLI…QNNIQKSQVP (161 aa). The tract at residues 272-564 is required for interaction with NFYA; that stretch reads NSNLIPKVLI…AQPKQSWNPF (293 aa). The segment at residues 284–346 is a DNA-binding region (homeobox 1); sequence NSIPTYNAAL…LKHGVSWTPE (63 aa). Glycyl lysine isopeptide (Lys-Gly) (interchain with G-Cter in SUMO2) cross-links involve residues K441, K454, K485, and K629. DNA-binding regions (homeobox) lie at residues 464–526 and 569–630; these read SFGI…KSNQ and PQKF…EEKM. Disordered regions lie at residues 626–667 and 732–770; these read KEEK…ICKK and SSMN…NNWD. S648 bears the Phosphoserine mark. Residues 660–722 constitute a DNA-binding region (homeobox 4); sequence STGKICKKTP…YAWKNGNLKW (63 aa). The interval 734–768 is required for nuclear localization; that stretch reads MNGLSSLRKRGRGRPKGRGRGRPRGRPRGSKRINN. The segment covering 740 to 764 has biased composition (basic residues); that stretch reads LRKRGRGRPKGRGRGRPRGRPRGSK. S774 carries the phosphoserine modification. The homeobox 5 DNA-binding region spans 777–832; that stretch reads KFKTGTAILKDYYLKHKFLNEQDLDELVNKSHMGYEQVREWFAERQRRSELGIELF. A disordered region spans residues 829–873; sequence IELFEENEEEDEVIDDQEEDEEETDDSDTWEPPRHVKRKLSKSDD. The segment covering 831-857 has biased composition (acidic residues); the sequence is LFEENEEEDEVIDDQEEDEEETDDSDT. Residues 831–873 form a required for repressor activity region; it reads LFEENEEEDEVIDDQEEDEEETDDSDTWEPPRHVKRKLSKSDD. Positions 863 to 873 are enriched in basic residues; sequence HVKRKLSKSDD.

It belongs to the ZHX family. As to quaternary structure, forms homodimers. Heterodimer (via HD1 domain) with ZHX2 (via HD1 domain). Also forms a heterodimer with ZHX3 which is a prerequisite for repressor activity. Interacts with ATF7IP and NFYA. Interacts (via homeobox domains) with DNMT3B (via PWWP domain). As to expression, ubiquitously expressed. Expressed in podocytes.

It localises to the nucleus. Functionally, acts as a transcriptional repressor. Increases DNMT3B-mediated repressive transcriptional activity when DNMT3B is tethered to DNA. May link molecule between DNMT3B and other co-repressor proteins. The chain is Zinc fingers and homeoboxes protein 1 (ZHX1) from Homo sapiens (Human).